A 512-amino-acid chain; its full sequence is Bestrophin-2 (512 aa).

Over 1-31 (MTVTYTARVAKARFGGFSKLLLLWRGSIYKL) the chain is Cytoplasmic. A Ca(2+)-binding site is contributed by Ala10. The helical transmembrane segment at 32–51 (LWRELLCFLGLFMALSAAYR) threads the bilayer. The Extracellular portion of the chain corresponds to 52 to 60 (FVLTEEQKR). The chain crosses the membrane as a helical span at residues 61-82 (YFEKLVLYCDRYASLIPVSFVL). At 83–238 (GFYVTLVVHR…WISVPLVYTQ (156 aa)) the chain is on the cytoplasmic side. A helical transmembrane segment spans residues 239 to 255 (VVTIAVYSYFLACLIGR). Residues 256–274 (QFLDPAQGYKDHDLDLCVP) are Extracellular-facing. Residues 275-288 (IFTLLQFFFYAGWL) form a helical membrane-spanning segment. Over 289-512 (KVAEQLINPF…PIGEEEESLA (224 aa)) the chain is Cytoplasmic. Residues Gln293, Asn296, Asp301, and Asp304 each coordinate Ca(2+). The interval 453-512 (VDLGQPEPESEPITGPESPALVPAPRAPSEPLTVVPLSGTRGPAPPWLPSPIGEEEESLA) is disordered.

This sequence belongs to the anion channel-forming bestrophin (TC 1.A.46) family. Calcium-sensitive chloride channel subfamily. Pentamer. Interacts with GLUL; this interaction tethers a fraction of GLUL to the membrane, causing a decrease of cytosolic glutamine synthase (GS) activity and inhibits the chloride channel activity of BEST2 by affecting the gating at the aperture in the absence of intracellular glutamate.

The protein localises to the cell membrane. The protein resides in the basolateral cell membrane. The enzyme catalyses chloride(in) = chloride(out). It carries out the reaction iodide(out) = iodide(in). It catalyses the reaction hydrogencarbonate(in) = hydrogencarbonate(out). The catalysed reaction is L-glutamate(out) = L-glutamate(in). The enzyme catalyses L-glutamine(out) = L-glutamine(in). Its activity is regulated as follows. Chloride channel activity is allosterically inhibited by GLUL/glutamine synthase (GS) which affects the gating at the aperture in the absence of intracellular glutamate. Inhibitory effect of GLUL is relieved upon increasing of intracellular level of L-glutamate. Its function is as follows. Ligand-gated anion channel that allows the movement of anions across cell membranes when activated by calcium (Ca2+). Transports a large specter of anions, namely mediates the movement of chloride, L-glutamate and iodide. Calcium-binding triggers the dilation of the aperture, but calcium-dependent gating is only effective when the size of the passing anion is bigger than the closed aperture. Mediates the calcium-activated hydrogencarbonate movement and participates in colonic hydrogencarbonate secretion concomitant with mucin secretion. In non-pigmented epithelium (NPE), mediates the efflux of intracellular L-glutamate; binding of intracellular L-glutamate activates and open both the neck and the aperture of the channel, leading to L-glutamate exit promoting chloride influx movement from the extracellular side in trans. Also exhibits a directional permeability for intracellular glutamine, in a similar manner as for L-glutamate. This is Bestrophin-2 from Bos taurus (Bovine).